The sequence spans 149 residues: Arginine repressor (149 aa).

Belongs to the ArgR family.

The protein resides in the cytoplasm. It functions in the pathway amino-acid biosynthesis; L-arginine biosynthesis [regulation]. Functionally, regulates arginine biosynthesis genes. This Bacillus cereus (strain ATCC 10987 / NRS 248) protein is Arginine repressor.